A 402-amino-acid chain; its full sequence is Multidrug resistance protein MdtH (402 aa).

Residues 1-12 (MSRVSQARNLGK) lie on the Cytoplasmic side of the membrane. Residues 13–33 (YFLLIDNMLVVLGFFVVFPLI) traverse the membrane as a helical segment. Residues 34 to 98 (SIRFVDQMGW…GFATMGIAHE (65 aa)) are Periplasmic-facing. The chain crosses the membrane as a helical span at residues 99–116 (PWLLWFSCFLSGLGGTLF). The Cytoplasmic portion of the chain corresponds to 117–138 (DPPRSALVVKLIRPEQRDRFFS). A helical membrane pass occupies residues 139 to 159 (LLMMQDSAGAVIGALLGSWLL). At 160 to 164 (QYDFR) the chain is on the periplasmic side. The chain crosses the membrane as a helical span at residues 165–185 (LVCATGAILFILCALFNAWLL). At 186–213 (PAWKLSTVRTPVREGMRRVMSDKRFVTY) the chain is on the cytoplasmic side. Residues 214–234 (VLTLAGYYMLAVQVMLMLPIM) traverse the membrane as a helical segment. Residues 235-243 (VNDIAGSPA) lie on the Periplasmic side of the membrane. Residues 244–264 (AVKWMYAIEACLSLTLLYPIA) form a helical membrane-spanning segment. The Cytoplasmic portion of the chain corresponds to 265 to 276 (RWSEKRFRLEHR). The helical transmembrane segment at 277 to 297 (LMAGLLVMSLSMLPIGMVGNL) threads the bilayer. Residues 298-299 (QQ) lie on the Periplasmic side of the membrane. Residues 300–320 (LFTLICAFYIGSVIAEPARET) form a helical membrane-spanning segment. The Cytoplasmic portion of the chain corresponds to 321 to 339 (LSASLADARARGSYMGFSR). A helical membrane pass occupies residues 340–360 (LGLAIGGAIGYIGGGWLFDMG). The Periplasmic portion of the chain corresponds to 361–367 (KALAQPE). Residues 368–388 (LPWMMLGIIGFITFLALGWQF) form a helical membrane-spanning segment. Topologically, residues 389–402 (SHKRTPRRMLEPGA) are cytoplasmic.

The protein belongs to the major facilitator superfamily. DHA1 family. MdtH (TC 2.A.1.2.21) subfamily.

It is found in the cell inner membrane. This chain is Multidrug resistance protein MdtH, found in Salmonella typhimurium (strain LT2 / SGSC1412 / ATCC 700720).